The following is a 391-amino-acid chain: Phosphoglycerate kinase (391 aa).

Residues 21-23, R36, 59-62, R113, and R146 contribute to the substrate site; these read DLN and HLGR. Residues K197, E319, and 345–348 each bind ATP; that span reads GGDT.

Belongs to the phosphoglycerate kinase family. In terms of assembly, monomer.

Its subcellular location is the cytoplasm. The catalysed reaction is (2R)-3-phosphoglycerate + ATP = (2R)-3-phospho-glyceroyl phosphate + ADP. It functions in the pathway carbohydrate degradation; glycolysis; pyruvate from D-glyceraldehyde 3-phosphate: step 2/5. The polypeptide is Phosphoglycerate kinase (Xylella fastidiosa (strain 9a5c)).